Consider the following 548-residue polypeptide: Chaperonin GroEL (548 aa).

ATP is bound by residues 30–33 (TLGP), Lys51, 87–91 (DGTTT), Gly415, 479–481 (NAA), and Asp495.

This sequence belongs to the chaperonin (HSP60) family. In terms of assembly, forms a cylinder of 14 subunits composed of two heptameric rings stacked back-to-back. Interacts with the co-chaperonin GroES.

The protein resides in the cytoplasm. The enzyme catalyses ATP + H2O + a folded polypeptide = ADP + phosphate + an unfolded polypeptide.. Functionally, together with its co-chaperonin GroES, plays an essential role in assisting protein folding. The GroEL-GroES system forms a nano-cage that allows encapsulation of the non-native substrate proteins and provides a physical environment optimized to promote and accelerate protein folding. The sequence is that of Chaperonin GroEL from Pectobacterium carotovorum subsp. carotovorum (strain PC1).